The following is a 281-amino-acid chain: Ribosomal protein L11 methyltransferase (281 aa).

S-adenosyl-L-methionine is bound by residues Thr131, Gly152, Asp174, and Asn217.

The protein belongs to the methyltransferase superfamily. PrmA family.

It localises to the cytoplasm. It catalyses the reaction L-lysyl-[protein] + 3 S-adenosyl-L-methionine = N(6),N(6),N(6)-trimethyl-L-lysyl-[protein] + 3 S-adenosyl-L-homocysteine + 3 H(+). Functionally, methylates ribosomal protein L11. The sequence is that of Ribosomal protein L11 methyltransferase from Phocaeicola vulgatus (strain ATCC 8482 / DSM 1447 / JCM 5826 / CCUG 4940 / NBRC 14291 / NCTC 11154) (Bacteroides vulgatus).